A 375-amino-acid chain; its full sequence is Succinyl-diaminopimelate desuccinylase (375 aa).

H66 serves as a coordination point for Zn(2+). D68 is a catalytic residue. Zn(2+) is bound at residue D99. E133 serves as the catalytic Proton acceptor. Zn(2+) is bound by residues E134, E162, and H348.

It belongs to the peptidase M20A family. DapE subfamily. As to quaternary structure, homodimer. Requires Zn(2+) as cofactor. The cofactor is Co(2+).

The catalysed reaction is N-succinyl-(2S,6S)-2,6-diaminopimelate + H2O = (2S,6S)-2,6-diaminopimelate + succinate. Its pathway is amino-acid biosynthesis; L-lysine biosynthesis via DAP pathway; LL-2,6-diaminopimelate from (S)-tetrahydrodipicolinate (succinylase route): step 3/3. Functionally, catalyzes the hydrolysis of N-succinyl-L,L-diaminopimelic acid (SDAP), forming succinate and LL-2,6-diaminopimelate (DAP), an intermediate involved in the bacterial biosynthesis of lysine and meso-diaminopimelic acid, an essential component of bacterial cell walls. The polypeptide is Succinyl-diaminopimelate desuccinylase (Escherichia coli O1:K1 / APEC).